The sequence spans 72 residues: Translation initiation factor IF-1 (72 aa).

The S1-like domain occupies 1-72 (MAKEDSIEMQ…SKGRIVFRAR (72 aa)).

This sequence belongs to the IF-1 family. Component of the 30S ribosomal translation pre-initiation complex which assembles on the 30S ribosome in the order IF-2 and IF-3, IF-1 and N-formylmethionyl-tRNA(fMet); mRNA recruitment can occur at any time during PIC assembly.

It is found in the cytoplasm. One of the essential components for the initiation of protein synthesis. Stabilizes the binding of IF-2 and IF-3 on the 30S subunit to which N-formylmethionyl-tRNA(fMet) subsequently binds. Helps modulate mRNA selection, yielding the 30S pre-initiation complex (PIC). Upon addition of the 50S ribosomal subunit IF-1, IF-2 and IF-3 are released leaving the mature 70S translation initiation complex. In Psychromonas ingrahamii (strain DSM 17664 / CCUG 51855 / 37), this protein is Translation initiation factor IF-1.